The chain runs to 445 residues: uncharacterized protein (445 aa).

Residues 139–160 (TESQKDLEYERKANKTKEENQQ) are disordered.

This is an uncharacterized protein from Mycoplasma pneumoniae (strain ATCC 29342 / M129 / Subtype 1) (Mycoplasmoides pneumoniae).